The following is a 308-amino-acid chain: Oxygen-dependent coproporphyrinogen-III oxidase (308 aa).

Position 100 (Ser-100) interacts with substrate. His-104 and His-114 together coordinate a divalent metal cation. Catalysis depends on His-114, which acts as the Proton donor. Position 116–118 (116–118 (NFR)) interacts with substrate. A divalent metal cation-binding residues include His-153 and His-183. Positions 248-283 (YVEFNLVFDRGTIFGLQSGGRTESILSSMPPMATWK) are important for dimerization. 266-268 (GGR) lines the substrate pocket.

The protein belongs to the aerobic coproporphyrinogen-III oxidase family. In terms of assembly, homodimer. A divalent metal cation serves as cofactor.

It is found in the cytoplasm. It carries out the reaction coproporphyrinogen III + O2 + 2 H(+) = protoporphyrinogen IX + 2 CO2 + 2 H2O. It functions in the pathway porphyrin-containing compound metabolism; protoporphyrin-IX biosynthesis; protoporphyrinogen-IX from coproporphyrinogen-III (O2 route): step 1/1. In terms of biological role, involved in the heme biosynthesis. Catalyzes the aerobic oxidative decarboxylation of propionate groups of rings A and B of coproporphyrinogen-III to yield the vinyl groups in protoporphyrinogen-IX. The chain is Oxygen-dependent coproporphyrinogen-III oxidase from Francisella tularensis subsp. mediasiatica (strain FSC147).